The primary structure comprises 141 residues: Large ribosomal subunit protein uL11 (141 aa).

It belongs to the universal ribosomal protein uL11 family. Part of the ribosomal stalk of the 50S ribosomal subunit. Interacts with L10 and the large rRNA to form the base of the stalk. L10 forms an elongated spine to which L12 dimers bind in a sequential fashion forming a multimeric L10(L12)X complex. One or more lysine residues are methylated.

Functionally, forms part of the ribosomal stalk which helps the ribosome interact with GTP-bound translation factors. The protein is Large ribosomal subunit protein uL11 of Moorella thermoacetica (strain ATCC 39073 / JCM 9320).